The sequence spans 107 residues: MVKAPRGYRNRTRRLLRKPVREKGSIPRLSTYLREYRVGDKVAIIINPSFPDWGMPHRRFHGLTGTVVGKRGEAYEVEVYLGRKRKTLFVPPVHLKPLSTAAERRGS.

It belongs to the eukaryotic ribosomal protein eL21 family.

This Aeropyrum pernix (strain ATCC 700893 / DSM 11879 / JCM 9820 / NBRC 100138 / K1) protein is Large ribosomal subunit protein eL21 (rpl21e).